Consider the following 313-residue polypeptide: Cilia- and flagella-associated protein 36 (313 aa).

Ser85 and Ser147 each carry phosphoserine. Residues 147–187 (SDLEQEEMKILKEVLRKSKEEYDQEEERKRKKQLSEAKTEE) are a coiled coil. Disordered regions lie at residues 165-204 (KEEYDQEEERKRKKQLSEAKTEEHPMQANETAKMSNSQGD) and 262-292 (KIKQNQTSEQKGKPAGEVEEMTEKPEMTAEE). A compositionally biased stretch (basic and acidic residues) spans 179-189 (QLSEAKTEEHP). The segment covering 192–203 (ANETAKMSNSQG) has biased composition (polar residues). Ser201 is subject to Phosphoserine. Residues 271 to 292 (QKGKPAGEVEEMTEKPEMTAEE) show a composition bias toward basic and acidic residues.

Belongs to the CFAP36 family. Interacts with ARL3.

It is found in the nucleus. The protein localises to the cytoplasm. The protein resides in the cell projection. Its subcellular location is the cilium. It localises to the flagellum. Its function is as follows. May act as an effector for ARL3. The chain is Cilia- and flagella-associated protein 36 from Bos taurus (Bovine).